The primary structure comprises 1069 residues: RE1-silencing transcription factor (1069 aa).

Positions 32-121 (DLHDLSKAEL…SLELSVVEPQ (90 aa)) are interaction with SIN3A. An interaction with SIN3B region spans residues 43 to 57 (APQLIMLANVALTGE). Residues 85–104 (SDSEGEGLEESAELKGDPSG) are disordered. An interaction with ZFP90 region spans residues 144 to 417 (PVAEDKCKNL…KSKHPTCPSK (274 aa)). The C2H2-type 1 zinc-finger motif lies at 158-180 (FRCKPCQYEAESEEQFVHHIRVH). The segment at 200–211 (SGASPSEEGEFS) is required for binding to the neuron-restrictive silencer element. 7 consecutive C2H2-type zinc fingers follow at residues 215–237 (IRCDRCGYNTNRYDHYTAHLKHH), 247–269 (YKCIICTYTTVSEYHWRKHLRNH), 275–297 (YTCSKCNYFSTEKNNYVQHVRTH), 303–325 (YKCELCPYSSSQKTHLTRHMRTH), 331–354 (FKCDQCNYVASNQHEVTRHARQVH), 360–382 (LNCPHCDYKTADRSNFKKHVELH), and 388–411 (FNCPVCDYAASKKCNLQYHFKSKH). Disordered stretches follow at residues 425-737 (KLKK…MELP) and 830-1022 (KASK…GKEG). Over residues 451–482 (EQAKTKGVDASARRSERPVKGVGKDVPKEKKP) the composition is skewed to basic and acidic residues. Residues 484–493 (SNASVVQVTT) show a composition bias toward polar residues. 2 stretches are compositionally biased toward basic and acidic residues: residues 498 to 511 (SAVETKAAEGKHTD) and 554 to 576 (ESKPKTSGEVPKGSRVEDRKADK). A compositionally biased stretch (basic residues) spans 584-600 (KGGKKTALKTKTAKKGS). Positions 630–643 (AVVTPSGSTQTELS) are enriched in polar residues. Composition is skewed to pro residues over residues 679 to 706 (PSPPQEPPQVEPPACVEPPPPVEPPCPM) and 713 to 734 (PSPPMEPSQVEPPPHLEPPLPM). Basic and acidic residues-rich tracts occupy residues 851 to 860 (RREETPKDQE) and 876 to 886 (GGTEEAGESRA). The segment covering 894 to 904 (STSALSSEQSS) has biased composition (low complexity). Over residues 930–943 (TEQKTDRVPLKDSA) the composition is skewed to basic and acidic residues. Ser948 bears the Phosphoserine mark. Low complexity predominate over residues 957–968 (EAAAPAVVASPP). The interval 981–1059 (EGIHSHDGSD…HLNRHLVNVY (79 aa)) is interaction with RCOR1. A C2H2-type 9 zinc finger spans residues 1032–1054 (FVCIFCDRSFRKEKDYSKHLNRH).

Isoform 1 and isoform 6 form heterodimers. Isoform 6: Forms homodimers and homooligomers; binds to the neuron-restrictive silencer element (NRSE) as monomer. Interacts with SIN3A, SIN3B and RCOR1. Interacts with CDYL. Interacts with EHMT1 and EHMT2 only in the presence of CDYL. Part of a complex containing at least CDYL, REST, WIZ, SETB1, EHMT1 and EHMT2. Interacts (via zinc-finger DNA-binding domain) with ZFP90 (via N- and C-termini); the interaction inhibits REST repressor activity. Interacts (via C2H2-type zinc finger 5) with PRICKLE1. Interacts with FBXW11 and BTRC. Interacts with USP7. In terms of processing, O-glycosylated. Post-translationally, phosphorylated; phosphorylation is required for ubiquitination. Ubiquitinated; ubiquitination is mediated by BTRC and leads to proteasomal degradation in G2 phase. Ubiquitination increases during neuronal differentiation. Deubiquitinated by USP7; leading to its stabilization and promoting the maintenance of neural progenitor cells. In terms of tissue distribution, expressed in the hippocampus including the granule cell layer of the dentate gyrus, the pyramidal cell layers of CA1 and CA3, the apical and basilar dendrite layers of the stratum radiatum and stratum oriens of CA1, the stratum lucidum and stratum oriens of CA3 and in astroglia (at protein level). Expressed in the brain, with the highest levels in the neurons of hippocampus, pons/medulla and midbrain.

It is found in the nucleus. The protein localises to the cytoplasm. In terms of biological role, transcriptional repressor which binds neuron-restrictive silencer element (NRSE) and represses neuronal gene transcription in non-neuronal cells. Restricts the expression of neuronal genes by associating with two distinct corepressors, SIN3A and RCOR1, which in turn recruit histone deacetylase to the promoters of REST-regulated genes. Mediates repression by recruiting the BHC complex at RE1/NRSE sites which acts by deacetylating and demethylating specific sites on histones, thereby acting as a chromatin modifier. Transcriptional repression by REST-CDYL via the recruitment of histone methyltransferase EHMT2 may be important in transformation suppression. Represses the expression of SRRM4 in non-neural cells to prevent the activation of neural-specific splicing events and to prevent production of REST isoform 6. Repressor activity may be inhibited by forming heterodimers with isoform 6, thereby preventing binding to NRSE or binding to corepressors and leading to derepression of target genes. Also maintains repression of neuronal genes in neural stem cells, and allows transcription and differentiation into neurons by dissociation from RE1/NRSE sites of target genes. Thereby is involved in maintaining the quiescent state of adult hippocampal neural stem cells and preventing premature differentiation into mature neurons. Plays a role in the developmental switch in synaptic NMDA receptor composition during postnatal development, by repressing GRIN2B expression and thereby altering NMDA receptor properties from containing primarily GRIN2B to primarily GRIN2A subunits. Acts as a regulator of osteoblast differentiation. Key repressor of gene expression in hypoxia; represses genes in hypoxia by direct binding to an RE1/NRSE site on their promoter regions. May also function in stress resistance in the brain during aging; possibly by regulating expression of genes involved in cell death and in the stress response. Repressor of gene expression in the hippocampus after ischemia by directly binding to RE1/NRSE sites and recruiting SIN3A and RCOR1 to promoters of target genes, thereby promoting changes in chromatin modifications and ischemia-induced cell death. After ischemia, might play a role in repression of miR-132 expression in hippocampal neurons, thereby leading to neuronal cell death. Its function is as follows. Binds to the 3' region of the neuron-restrictive silencer element (NRSE), with lower affinity than full-length REST isoform 1. Exhibits weaker repressor activity compared to isoform 1. May negatively regulate the repressor activity of isoform 1 by binding to isoform 1, thereby preventing its binding to NRSE and leading to derepression of target genes. However, in another study, does not appear to be implicated in repressor activity of a NRSE motif-containing reporter construct nor in inhibitory activity on the isoform 1 transcriptional repressor activity. Post-transcriptional inactivation of REST by SRRM4-dependent alternative splicing into isoform 6 is required in mechanosensory hair cells in the inner ear for derepression of neuronal genes and hearing. The protein is RE1-silencing transcription factor (Rest) of Rattus norvegicus (Rat).